Here is a 320-residue protein sequence, read N- to C-terminus: Flavonol 4'-sulfotransferase (320 aa).

69–74 (KSGTTW) provides a ligand contact to 3'-phosphoadenylyl sulfate. Histidine 129 serves as the catalytic Proton acceptor. 3'-phosphoadenylyl sulfate is bound by residues arginine 151, serine 159, tyrosine 217, and 285 to 287 (RKA).

It belongs to the sulfotransferase 1 family. Highest in shoot tips and lowest in mature leaves and roots.

Its subcellular location is the cytoplasm. It catalyses the reaction quercetin 3-sulfate + 3'-phosphoadenylyl sulfate = quercetin 3,4'-bissulfate + adenosine 3',5'-bisphosphate + H(+). With respect to regulation, no requirement for divalent cations and insensitive to p-chloromercuribenzoate, iodoacetate, or iodoacetamide. Functionally, sulfotransferase that utilizes 3'-phospho-5'-adenylyl sulfate (PAPS) as sulfonate donor to catalyze the sulfate conjugation of quercetin 3-sulfate &gt; kaempferol 3-sulfate &gt; isorhamnetin 3-sulfate &gt; patuletin 3-sulfate, but not tamarixetin 3-sulfate. O-sulfation of position 4' of flavonol. May play a role in auxin transport. This is Flavonol 4'-sulfotransferase from Flaveria chlorifolia (Clasping yellowtops).